The chain runs to 339 residues: Heat-inducible transcription repressor HrcA (339 aa).

The protein belongs to the HrcA family.

Its function is as follows. Negative regulator of class I heat shock genes (grpE-dnaK-dnaJ and groELS operons). Prevents heat-shock induction of these operons. The chain is Heat-inducible transcription repressor HrcA from Acidothermus cellulolyticus (strain ATCC 43068 / DSM 8971 / 11B).